We begin with the raw amino-acid sequence, 222 residues long: DnaJ homolog subfamily B member 9 (222 aa).

An N-terminal signal peptide occupies residues 1–23; that stretch reads MATPQSVFVFAICILMITELILA. Positions 26-90 constitute a J domain; the sequence is NYYDILGVPK…NRRKEYDIIG (65 aa). Residues 91–222 form a divergent targeting domain region; that stretch reads HSAFTNGKGQ…VTTYTDCSGQ (132 aa). S133 bears the Phosphoserine mark.

In terms of assembly, interacts with HSPA5/BiP; interaction is direct. Interacts with ERN1/IRE1 (via the luminal region). Interacts with DERL1.

It localises to the endoplasmic reticulum lumen. Its function is as follows. Co-chaperone for Hsp70 protein HSPA5/BiP that acts as a key repressor of the ERN1/IRE1-mediated unfolded protein response (UPR). J domain-containing co-chaperones stimulate the ATPase activity of Hsp70 proteins and are required for efficient substrate recognition by Hsp70 proteins. In the unstressed endoplasmic reticulum, interacts with the luminal region of ERN1/IRE1 and selectively recruits HSPA5/BiP: HSPA5/BiP disrupts the dimerization of the active ERN1/IRE1 luminal region, thereby inactivating ERN1/IRE1. Also involved in endoplasmic reticulum-associated degradation (ERAD) of misfolded proteins. Required for survival of B-cell progenitors and normal antibody production. This is DnaJ homolog subfamily B member 9 from Rattus norvegicus (Rat).